Consider the following 426-residue polypeptide: Torsin-4A (426 aa).

The tract at residues 41 to 60 (QPGTEPDSGTGTLGPTGSLG) is disordered. A compositionally biased stretch (low complexity) spans 48 to 60 (SGTGTLGPTGSLG). A phosphoserine mark is found at Ser-58 and Ser-76. Residue Thr-84 is modified to Phosphothreonine. Ser-101 carries the post-translational modification Phosphoserine. A helical transmembrane segment spans residues 117-133 (CLLLLVAIVGFQVLNAI). Position 189–196 (189–196 (GPSGVGKS)) interacts with ATP.

Belongs to the ClpA/ClpB family. Torsin subfamily.

It localises to the membrane. This is Torsin-4A (Tor4a) from Mus musculus (Mouse).